A 1937-amino-acid polypeptide reads, in one-letter code: Myosin-8 (1937 aa).

In terms of domain architecture, Myosin N-terminal SH3-like spans 35–84 (DAKTSVFVAEPKESYVKSTIQSKEGGKVTVKTEGGATLTVREDQVFPMNP). Phosphothreonine is present on residues Thr66 and Thr71. Residues 88–781 (DKIEDMAMMT…LLGLLEEMRD (694 aa)) enclose the Myosin motor domain. Residue Lys132 is modified to N6,N6,N6-trimethyllysine. ATP is bound at residue 181–188 (GESGAGKT). Phosphotyrosine is present on Tyr389. Phosphoserine is present on Ser392. The residue at position 419 (Thr419) is a Phosphothreonine. Residue Tyr424 is modified to Phosphotyrosine. Ser625 carries the post-translational modification Phosphoserine. An actin-binding region spans residues 658–680 (LNKLMTNLRSTHPHFVRCIIPNE). Position 756 is a pros-methylhistidine (His756). Residues 760-774 (KFGHTKVFFKAGLLG) are actin-binding. Positions 781–813 (DEKLAQIITRTQAVCRGFLMRVEYQKMLQRREA) constitute an IQ domain. Residues 842–1937 (LLKSAETEKE…REVHTKISAE (1096 aa)) adopt a coiled-coil conformation. Phosphoserine is present on residues Ser1091 and Ser1095. Residues 1126–1146 (EAERASRAKAEKQRSDLSREL) are disordered. The segment covering 1127–1146 (AERASRAKAEKQRSDLSREL) has biased composition (basic and acidic residues). Residues Ser1161, Ser1236, Ser1242, and Ser1260 each carry the phosphoserine modification. Phosphothreonine is present on residues Thr1264 and Thr1285. 3 positions are modified to phosphoserine: Ser1291, Ser1302, and Ser1305. Tyr1463 carries the phosphotyrosine modification. Thr1466 carries the phosphothreonine modification. A Phosphoserine modification is found at Ser1473. The residue at position 1491 (Tyr1491) is a Phosphotyrosine. Ser1494 carries the phosphoserine modification. The residue at position 1500 (Thr1500) is a Phosphothreonine. Phosphoserine is present on Ser1513. Thr1516 carries the post-translational modification Phosphothreonine. Phosphoserine occurs at positions 1553, 1573, 1602, 1713, and 1725. Thr1729 bears the Phosphothreonine mark. A Phosphoserine modification is found at Ser1738.

This sequence belongs to the TRAFAC class myosin-kinesin ATPase superfamily. Myosin family. Muscle myosin is a hexameric protein that consists of 2 heavy chain subunits (MHC), 2 alkali light chain subunits (MLC) and 2 regulatory light chain subunits (MLC-2).

The protein resides in the cytoplasm. Its subcellular location is the myofibril. In terms of biological role, muscle contraction. The sequence is that of Myosin-8 (MYH8) from Homo sapiens (Human).